Here is a 336-residue protein sequence, read N- to C-terminus: Cell division protein ZipA (336 aa).

The Periplasmic portion of the chain corresponds to 1-2 (ME). A helical transmembrane segment spans residues 3–23 (LHILFFILAGLLIAVLISFSL). Over 24 to 336 (WSARREKSRI…SRQSYLARVS (313 aa)) the chain is Cytoplasmic. The interval 56-77 (PSLNPQSYAQTTGQHGETEADN) is disordered. Residues 59–70 (NPQSYAQTTGQH) are compositionally biased toward polar residues.

This sequence belongs to the ZipA family. In terms of assembly, interacts with FtsZ via their C-terminal domains.

The protein resides in the cell inner membrane. Functionally, essential cell division protein that stabilizes the FtsZ protofilaments by cross-linking them and that serves as a cytoplasmic membrane anchor for the Z ring. Also required for the recruitment to the septal ring of downstream cell division proteins. This chain is Cell division protein ZipA, found in Actinobacillus pleuropneumoniae serotype 3 (strain JL03).